The following is a 794-amino-acid chain: Histone-lysine N-methyltransferase, H3 lysine-9 specific SUVH5 (794 aa).

2 disordered regions span residues 187–210 and 254–276; these read VGRD…KRSI and SPVK…KNSE. The span at 194 to 203 shows a compositional bias: polar residues; the sequence is NMGSKFSKNG. The segment covering 258 to 276 has biased composition (basic and acidic residues); sequence PSEKRNGDYGEGSMRKNSE. One can recognise a YDG domain in the interval 365 to 515; the sequence is GTVPGVEVGD…KLVFKFKLRR (151 aa). Residues 585–644 enclose the Pre-SET domain; that stretch reads KSCGCTNGCSKSKNCACIVKNGGKIPYYDGAIVEIKPLVYECGPHCKCPPSCNMRVSQHG. Positions 647 to 764 constitute an SET domain; it reads IKLEIFKTES…PLQELSYDYN (118 aa). The 17-residue stretch at 778–794 folds into the Post-SET domain; it reads KKKFCYCGSAECSGRLY.

It belongs to the class V-like SAM-binding methyltransferase superfamily. Histone-lysine methyltransferase family. Suvar3-9 subfamily. Expressed in leaves stems and flowers.

The protein resides in the nucleus. It is found in the chromosome. Its subcellular location is the centromere. The enzyme catalyses N(6)-methyl-L-lysyl(9)-[histone H3] + S-adenosyl-L-methionine = N(6),N(6)-dimethyl-L-lysyl(9)-[histone H3] + S-adenosyl-L-homocysteine + H(+). It carries out the reaction L-lysyl(9)-[histone H3] + S-adenosyl-L-methionine = N(6)-methyl-L-lysyl(9)-[histone H3] + S-adenosyl-L-homocysteine + H(+). Histone methyltransferase. Methylates 'Lys-9' of histone H3. H3 'Lys-9' methylation represents a specific tag for epigenetic transcriptional repression. This Arabidopsis thaliana (Mouse-ear cress) protein is Histone-lysine N-methyltransferase, H3 lysine-9 specific SUVH5 (SUVH5).